The primary structure comprises 174 residues: Small ribosomal subunit protein uS5c (174 aa).

Residues 17 to 80 (WEERVVQVKR…TDAKKHLVTV (64 aa)) enclose the S5 DRBM domain.

It belongs to the universal ribosomal protein uS5 family. As to quaternary structure, part of the 30S ribosomal subunit. Contacts protein S4.

It localises to the plastid. It is found in the chloroplast. Its function is as follows. With S4 and S12 plays an important role in translational accuracy. The chain is Small ribosomal subunit protein uS5c (rps5) from Pyropia yezoensis (Susabi-nori).